The following is a 155-amino-acid chain: Xanthine-guanine phosphoribosyltransferase (155 aa).

5-phospho-alpha-D-ribose 1-diphosphate-binding positions include 37 to 38 (RG), R69, and 90 to 98 (EDLVDTGTT). R69 provides a ligand contact to GMP. D91 contributes to the Mg(2+) binding site. The guanine site is built by D94 and I137. Residues D94 and I137 each coordinate xanthine. GMP-binding positions include 94–98 (DTGTT) and 136–137 (WI).

It belongs to the purine/pyrimidine phosphoribosyltransferase family. XGPT subfamily. Homotetramer. Requires Mg(2+) as cofactor.

The protein resides in the cell inner membrane. The enzyme catalyses GMP + diphosphate = guanine + 5-phospho-alpha-D-ribose 1-diphosphate. It catalyses the reaction XMP + diphosphate = xanthine + 5-phospho-alpha-D-ribose 1-diphosphate. It carries out the reaction IMP + diphosphate = hypoxanthine + 5-phospho-alpha-D-ribose 1-diphosphate. The protein operates within purine metabolism; GMP biosynthesis via salvage pathway; GMP from guanine: step 1/1. Its pathway is purine metabolism; XMP biosynthesis via salvage pathway; XMP from xanthine: step 1/1. Functionally, purine salvage pathway enzyme that catalyzes the transfer of the ribosyl-5-phosphate group from 5-phospho-alpha-D-ribose 1-diphosphate (PRPP) to the N9 position of the 6-oxopurines guanine and xanthine to form the corresponding ribonucleotides GMP (guanosine 5'-monophosphate) and XMP (xanthosine 5'-monophosphate), with the release of PPi. To a lesser extent, also acts on hypoxanthine. This Aeromonas hydrophila subsp. hydrophila (strain ATCC 7966 / DSM 30187 / BCRC 13018 / CCUG 14551 / JCM 1027 / KCTC 2358 / NCIMB 9240 / NCTC 8049) protein is Xanthine-guanine phosphoribosyltransferase.